Reading from the N-terminus, the 296-residue chain is Bifunctional protein FolD (296 aa).

NADP(+)-binding positions include 166 to 168 (GRS), S195, and I236.

It belongs to the tetrahydrofolate dehydrogenase/cyclohydrolase family. In terms of assembly, homodimer.

It catalyses the reaction (6R)-5,10-methylene-5,6,7,8-tetrahydrofolate + NADP(+) = (6R)-5,10-methenyltetrahydrofolate + NADPH. The catalysed reaction is (6R)-5,10-methenyltetrahydrofolate + H2O = (6R)-10-formyltetrahydrofolate + H(+). It participates in one-carbon metabolism; tetrahydrofolate interconversion. Functionally, catalyzes the oxidation of 5,10-methylenetetrahydrofolate to 5,10-methenyltetrahydrofolate and then the hydrolysis of 5,10-methenyltetrahydrofolate to 10-formyltetrahydrofolate. The chain is Bifunctional protein FolD from Chlorobium limicola (strain DSM 245 / NBRC 103803 / 6330).